A 436-amino-acid chain; its full sequence is Chorion-specific transcription factor GCMa (436 aa).

Positions 14–169 (LSWDINDVKL…KLEAEARRAM (156 aa)) form a DNA-binding region, GCM. C76, C82, C86, C113, C116, C125, H152, and H154 together coordinate Zn(2+). The segment at 171–202 (KVNTAPSSVSLSLKGSTETRSLPGETQSQGSL) is disordered. Residues 174 to 202 (TAPSSVSLSLKGSTETRSLPGETQSQGSL) show a composition bias toward polar residues.

In terms of processing, polyubiquitinated in the presence of UBE2D2 and FBXW2 (in vitro). As to expression, highly expressed in the placenta. Expressed in trophoblast cells of the villi.

It is found in the nucleus. Transcription factor involved in the control of expression of placental growth factor (PGF) and other placenta-specific genes. Binds to the trophoblast-specific element 2 (TSE2) of the aromatase gene enhancer. Binds to the SYDE1 promoter. Has a central role in mediating the differentiation of trophoblast cells along both the villous and extravillous pathways in placental development. In Homo sapiens (Human), this protein is Chorion-specific transcription factor GCMa (GCM1).